The sequence spans 349 residues: Glycerol-3-phosphate dehydrogenase [NAD(+)], cytoplasmic (349 aa).

NAD(+) contacts are provided by residues 10-15 (GSGNWG), F41, and F97. Residue K120 participates in substrate binding. A153 is an NAD(+) binding site. Residue S154 is modified to Phosphoserine. The Proton acceptor role is filled by K204. Residue R269 participates in NAD(+) binding. 269-270 (RN) contributes to the substrate binding site. The residue at position 289 (K289) is an N6-succinyllysine. NAD(+) contacts are provided by K296 and Q298. Y326 carries the phosphotyrosine modification.

It belongs to the NAD-dependent glycerol-3-phosphate dehydrogenase family. As to quaternary structure, homodimer. In terms of tissue distribution, expressed in liver (at protein level).

Its subcellular location is the cytoplasm. The enzyme catalyses sn-glycerol 3-phosphate + NAD(+) = dihydroxyacetone phosphate + NADH + H(+). Its activity is regulated as follows. Inhibited by zinc ions and sulfate. Functionally, has glycerol-3-phosphate dehydrogenase activity. This Homo sapiens (Human) protein is Glycerol-3-phosphate dehydrogenase [NAD(+)], cytoplasmic.